We begin with the raw amino-acid sequence, 346 residues long: Phosphoribosylformylglycinamidine cyclo-ligase (346 aa).

The protein belongs to the AIR synthase family.

The protein localises to the cytoplasm. It carries out the reaction 2-formamido-N(1)-(5-O-phospho-beta-D-ribosyl)acetamidine + ATP = 5-amino-1-(5-phospho-beta-D-ribosyl)imidazole + ADP + phosphate + H(+). It participates in purine metabolism; IMP biosynthesis via de novo pathway; 5-amino-1-(5-phospho-D-ribosyl)imidazole from N(2)-formyl-N(1)-(5-phospho-D-ribosyl)glycinamide: step 2/2. The chain is Phosphoribosylformylglycinamidine cyclo-ligase from Bacillus cereus (strain B4264).